An 858-amino-acid polypeptide reads, in one-letter code: Taste receptor type 1 member 3 (858 aa).

Positions 1–20 (MPGLAILGLSLAAFLELGMG) are cleaved as a signal peptide. Residues 21–575 (SSLCLSQQFK…FLAWGEPAVL (555 aa)) are Extracellular-facing. N-linked (GlcNAc...) asparagine glycosylation is found at Asn85, Asn130, Asn203, Asn264, Asn379, Asn387, Asn418, Asn439, and Asn482. Residues 576 to 596 (SLLLLLCLVLGLTLAALGLFV) traverse the membrane as a helical segment. Over 597–610 (HYWDSPLVQASGGS) the chain is Cytoplasmic. A helical membrane pass occupies residues 611–631 (LFCFGLICLGLFCLSVLLFPG). The Extracellular segment spans residues 632-644 (RPRSASCLAQQPM). Residues 645–665 (AHLPLTGCLSTLFLQAAEIFV) traverse the membrane as a helical segment. At 666–687 (ESELPLSWANWLCSYLRGPWAW) the chain is on the cytoplasmic side. A helical transmembrane segment spans residues 688 to 708 (LVVLLATLVEAALCAWYLMAF). The Extracellular portion of the chain corresponds to 709-735 (PPEVVTDWQVLPTEVLEHCRMRSWVSL). The helical transmembrane segment at 736–756 (GLVHITNAVLAFLCFLGTFLV) threads the bilayer. Over 757 to 767 (QSQPGRYNRAR) the chain is Cytoplasmic. Residues 768–788 (GLTFAMLAYFIIWVSFVPLLA) form a helical membrane-spanning segment. Topologically, residues 789-796 (NVQVAYQP) are extracellular. The chain crosses the membrane as a helical span at residues 797–817 (AVQMGAILFCALGILATFHLP). At 818–858 (KCYVLLWLPELNTQEFFLGRSPKEASDGNSGSSEATRGHSE) the chain is on the cytoplasmic side. Residues 839 to 858 (PKEASDGNSGSSEATRGHSE) are disordered.

The protein belongs to the G-protein coupled receptor 3 family. TAS1R subfamily. Forms homodimers or heterodimers with TAS1R1 and TAS1R2.

The protein resides in the cell membrane. Putative taste receptor. TAS1R1/TAS1R3 responds to the umami taste stimulus (the taste of monosodium glutamate) and also to most of the 20 standard L-amino acids, but not to their D-enantiomers or other compounds. TAS1R2/TAS1R3 recognizes diverse natural and synthetic sweeteners. TAS1R3 is essential for the recognition and response to the disaccharide trehalose. Sequence differences within and between species can significantly influence the selectivity and specificity of taste responses. The sequence is that of Taste receptor type 1 member 3 (Tas1r3) from Rattus norvegicus (Rat).